The sequence spans 161 residues: Lipoprotein signal peptidase (161 aa).

Transmembrane regions (helical) follow at residues 64-84 (YRVP…AWFY) and 92-114 (VLGR…DRVR). Active-site residues include D120 and D138. A helical membrane pass occupies residues 131–151 (WPAFNVADSAICVGVGMLLLA).

It belongs to the peptidase A8 family.

The protein localises to the cell inner membrane. It catalyses the reaction Release of signal peptides from bacterial membrane prolipoproteins. Hydrolyzes -Xaa-Yaa-Zaa-|-(S,diacylglyceryl)Cys-, in which Xaa is hydrophobic (preferably Leu), and Yaa (Ala or Ser) and Zaa (Gly or Ala) have small, neutral side chains.. Its pathway is protein modification; lipoprotein biosynthesis (signal peptide cleavage). Its function is as follows. This protein specifically catalyzes the removal of signal peptides from prolipoproteins. The polypeptide is Lipoprotein signal peptidase (Syntrophotalea carbinolica (strain DSM 2380 / NBRC 103641 / GraBd1) (Pelobacter carbinolicus)).